We begin with the raw amino-acid sequence, 243 residues long: Nuclear ubiquitous casein and cyclin-dependent kinase substrate 1 (243 aa).

Residues 1-243 (MSRPVRNRKV…SEDDAQSGED (243 aa)) are disordered. Y13 is subject to Phosphotyrosine. S14 and S19 each carry phosphoserine. At Y26 the chain carries Phosphotyrosine. The segment covering 35 to 51 (KKIRSSPREAKNKRRSG) has biased composition (basic residues). Phosphoserine is present on residues S54, S58, S61, S73, S75, and S79. Basic and acidic residues predominate over residues 64–77 (KDVKTKKDDSHSAE). A compositionally biased stretch (low complexity) spans 91-100 (QQRQAASKAA). Over residues 111–124 (VGSEEEQEEEDEAP) the composition is skewed to acidic residues. A phosphoserine mark is found at S113, S130, S132, and S144. Over residues 132 to 145 (SDEDFLVEDDDDSD) the composition is skewed to acidic residues. A compositionally biased stretch (basic residues) spans 149–174 (SKKKNKKMVKKSKPERKEKKMPKPRL). T179 carries the phosphothreonine modification. S181 is subject to Phosphoserine. Residues 197 to 206 (ASKEKTPSPK) show a composition bias toward basic and acidic residues. The residue at position 202 (T202) is a Phosphothreonine. Phosphoserine is present on residues S204, S214, S223, S229, S234, and S240. Residues 232 to 243 (EGSEDDAQSGED) show a composition bias toward acidic residues.

As to quaternary structure, does not interact with RAD51. Phosphorylated in an ATM-dependent manner in response to DNA damage. Phosphorylated by CDK1 and casein kinase.

The protein localises to the nucleus. The protein resides in the chromosome. Chromatin-associated protein involved in DNA repair by promoting homologous recombination (HR). Binds double-stranded DNA (dsDNA) and secondary DNA structures, such as D-loop structures, but with less affinity than RAD51AP1. The sequence is that of Nuclear ubiquitous casein and cyclin-dependent kinase substrate 1 (NUCKS1) from Bos taurus (Bovine).